The primary structure comprises 212 residues: MQNFDKTAVIDAANALPGRLTPMPVATLHVVNGHSMTHVPEGMEVAIFAMGCFWGVERLFWQQPGVYSTAAGYSGGYTPNPTYHEVCSGRTAHAEVVRVVFDPAIISYKQLLQIFWENHDPAQGMRQGGDVGTQYRSAIYVLTPEQETQAQESQALFQQAMTKAGDSRAITSEIAAALPFYYAEDDHQQYLYKNPQGYCGLGGIGVCMPPNL.

The active site involves Cys-52.

The protein belongs to the MsrA Met sulfoxide reductase family.

It carries out the reaction L-methionyl-[protein] + [thioredoxin]-disulfide + H2O = L-methionyl-(S)-S-oxide-[protein] + [thioredoxin]-dithiol. The enzyme catalyses [thioredoxin]-disulfide + L-methionine + H2O = L-methionine (S)-S-oxide + [thioredoxin]-dithiol. Its function is as follows. Has an important function as a repair enzyme for proteins that have been inactivated by oxidation. Catalyzes the reversible oxidation-reduction of methionine sulfoxide in proteins to methionine. This chain is Peptide methionine sulfoxide reductase MsrA, found in Yersinia enterocolitica serotype O:8 / biotype 1B (strain NCTC 13174 / 8081).